A 113-amino-acid polypeptide reads, in one-letter code: Small ribosomal subunit protein bS16 (113 aa).

The segment at proline 84–alanine 113 is disordered.

It belongs to the bacterial ribosomal protein bS16 family.

The polypeptide is Small ribosomal subunit protein bS16 (Gluconacetobacter diazotrophicus (strain ATCC 49037 / DSM 5601 / CCUG 37298 / CIP 103539 / LMG 7603 / PAl5)).